Reading from the N-terminus, the 200-residue chain is 3-isopropylmalate dehydratase small subunit (200 aa).

This sequence belongs to the LeuD family. LeuD type 1 subfamily. As to quaternary structure, heterodimer of LeuC and LeuD.

It carries out the reaction (2R,3S)-3-isopropylmalate = (2S)-2-isopropylmalate. It participates in amino-acid biosynthesis; L-leucine biosynthesis; L-leucine from 3-methyl-2-oxobutanoate: step 2/4. Functionally, catalyzes the isomerization between 2-isopropylmalate and 3-isopropylmalate, via the formation of 2-isopropylmaleate. The sequence is that of 3-isopropylmalate dehydratase small subunit from Vibrio parahaemolyticus serotype O3:K6 (strain RIMD 2210633).